A 231-amino-acid polypeptide reads, in one-letter code: NADH-ubiquinone oxidoreductase chain 4 (231 aa).

6 helical membrane passes run 1–21 (PIAG…YGII), 34–54 (VFLP…LTCL), 61–80 (SLIA…AIMI), 84–106 (WGLS…LFCL), 118–138 (ILIL…WWLL), and 169–189 (TIIL…HMFL).

It belongs to the complex I subunit 4 family.

The protein localises to the mitochondrion membrane. It catalyses the reaction a ubiquinone + NADH + 5 H(+)(in) = a ubiquinol + NAD(+) + 4 H(+)(out). Its function is as follows. Core subunit of the mitochondrial membrane respiratory chain NADH dehydrogenase (Complex I) that is believed to belong to the minimal assembly required for catalysis. Complex I functions in the transfer of electrons from NADH to the respiratory chain. The immediate electron acceptor for the enzyme is believed to be ubiquinone. This chain is NADH-ubiquinone oxidoreductase chain 4 (MT-ND4), found in Porthidium nasutum (Hognosed pitviper).